Consider the following 698-residue polypeptide: Elongation factor G (698 aa).

In terms of domain architecture, tr-type G spans 10-285 (AATRNIGIMA…AVVDFLPSPT (276 aa)). Residues 19 to 26 (AHIDAGKT), 83 to 87 (DTPGH), and 137 to 140 (NKMD) each bind GTP.

Belongs to the TRAFAC class translation factor GTPase superfamily. Classic translation factor GTPase family. EF-G/EF-2 subfamily.

The protein localises to the cytoplasm. Its function is as follows. Catalyzes the GTP-dependent ribosomal translocation step during translation elongation. During this step, the ribosome changes from the pre-translocational (PRE) to the post-translocational (POST) state as the newly formed A-site-bound peptidyl-tRNA and P-site-bound deacylated tRNA move to the P and E sites, respectively. Catalyzes the coordinated movement of the two tRNA molecules, the mRNA and conformational changes in the ribosome. This chain is Elongation factor G, found in Parafrankia sp. (strain EAN1pec).